Reading from the N-terminus, the 289-residue chain is Formamidopyrimidine-DNA glycosylase (289 aa).

The active-site Schiff-base intermediate with DNA is Pro2. The active-site Proton donor is Glu3. Lys60 serves as the catalytic Proton donor; for beta-elimination activity. DNA is bound by residues His94, Arg126, and Arg167. The FPG-type zinc finger occupies 252–287 (QVYGKPAGTPCPRCGTGLARIRIAGRSSVFCPRCQP). Catalysis depends on Arg277, which acts as the Proton donor; for delta-elimination activity.

The protein belongs to the FPG family. As to quaternary structure, monomer. Requires Zn(2+) as cofactor.

It catalyses the reaction Hydrolysis of DNA containing ring-opened 7-methylguanine residues, releasing 2,6-diamino-4-hydroxy-5-(N-methyl)formamidopyrimidine.. It carries out the reaction 2'-deoxyribonucleotide-(2'-deoxyribose 5'-phosphate)-2'-deoxyribonucleotide-DNA = a 3'-end 2'-deoxyribonucleotide-(2,3-dehydro-2,3-deoxyribose 5'-phosphate)-DNA + a 5'-end 5'-phospho-2'-deoxyribonucleoside-DNA + H(+). In terms of biological role, involved in base excision repair of DNA damaged by oxidation or by mutagenic agents. Acts as a DNA glycosylase that recognizes and removes damaged bases. Has a preference for oxidized purines, such as 7,8-dihydro-8-oxoguanine (8-oxoG). Has AP (apurinic/apyrimidinic) lyase activity and introduces nicks in the DNA strand. Cleaves the DNA backbone by beta-delta elimination to generate a single-strand break at the site of the removed base with both 3'- and 5'-phosphates. The protein is Formamidopyrimidine-DNA glycosylase of Thermomicrobium roseum (strain ATCC 27502 / DSM 5159 / P-2).